The sequence spans 86 residues: Putative protein adenylyltransferase MJ1215 (86 aa).

The GSX(10)DXD motif signature appears at 35–49 (GSYARGEQKETSDID). 3 residues coordinate Mg(2+): Asp-47, Asp-49, and Asp-79.

The protein belongs to the MntA antitoxin family. In terms of assembly, probably forms a complex with cognate toxin MJ1216. Requires Mg(2+) as cofactor.

It carries out the reaction L-tyrosyl-[protein] + ATP = O-(5'-adenylyl)-L-tyrosyl-[protein] + diphosphate. It catalyses the reaction O-(5'-adenylyl)-L-tyrosyl-[protein] + ATP = O-[5'-(adenylyl-(5'-&gt;3')-adenylyl)]-L-tyrosyl-[protein] + diphosphate. Functionally, probable antitoxin component of a putative type VII toxin-antitoxin (TA) system. Neutralizes cognate toxic MJ1216 by di-AMPylation. This is Putative protein adenylyltransferase MJ1215 from Methanocaldococcus jannaschii (strain ATCC 43067 / DSM 2661 / JAL-1 / JCM 10045 / NBRC 100440) (Methanococcus jannaschii).